The following is a 350-amino-acid chain: Atypical chemokine receptor 4 (350 aa).

Over 1–41 (MAVEYNQSTDYYYEENEMNDTHDYSQYEVICIKEEVRKFAK) the chain is Extracellular. 2 N-linked (GlcNAc...) asparagine glycosylation sites follow: N6 and N19. The chain crosses the membrane as a helical span at residues 42–66 (VFLPAFFTIAFIIGLAGNSTVVAIY). At 67-79 (AYYKKRRTKTDVY) the chain is on the cytoplasmic side. A helical transmembrane segment spans residues 80–99 (ILNLAVADLFLLFTLPFWAV). Residues 100-113 (NAVHGWVLGKIMCK) lie on the Extracellular side of the membrane. A disulfide bond links C112 and C184. Residues 114–135 (VTSALYTVNFVSGMQFLACIST) traverse the membrane as a helical segment. The Cytoplasmic portion of the chain corresponds to 136-153 (DRYWAVTKAPSQSGVGKP). Residues 154-175 (CWVICFCVWVAAILLSIPQLVF) traverse the membrane as a helical segment. Residues 176 to 199 (YTVNHKARCVPIFPYHLGTSMKAS) are Extracellular-facing. The helical transmembrane segment at 200–222 (IQILEICIGFIIPFLIMAVCYFI) threads the bilayer. At 223 to 241 (TAKTLIKMPNIKKSQPLKV) the chain is on the cytoplasmic side. Residues 242–265 (LFTVVIVFIVTQLPYNIVKFCQAI) traverse the membrane as a helical segment. The Extracellular segment spans residues 266–283 (DIIYSLITDCDMSKRMDV). A helical transmembrane segment spans residues 284–306 (AIQITESIALFHSCLNPVLYVFM). The Cytoplasmic portion of the chain corresponds to 307 to 350 (GTSFKNYIMKVAKKYGSWRRQRQNVEEIPFESEDATEPTSTFSI).

This sequence belongs to the G-protein coupled receptor 1 family. Atypical chemokine receptor subfamily. In terms of assembly, forms heteromers with CXCR3. Interacts with ARRB1 and ARRB2. Post-translationally, the Ser/Thr residues in the C-terminal cytoplasmic tail may be phosphorylated. As to expression, expressed in circumvallate and fungiform papillae, olfactory epithelium and lung. Lower expression in liver, kidney and tongue epithelium bearing no taste papillae. Very low expression in the cerebral cortex of the brain.

The protein resides in the early endosome. It localises to the recycling endosome. Its subcellular location is the cell membrane. Atypical chemokine receptor that controls chemokine levels and localization via high-affinity chemokine binding that is uncoupled from classic ligand-driven signal transduction cascades, resulting instead in chemokine sequestration, degradation, or transcytosis. Also known as interceptor (internalizing receptor) or chemokine-scavenging receptor or chemokine decoy receptor. Acts as a receptor for chemokines CCL2, CCL8, CCL13, CCL19, CCL21 and CCL25. Chemokine-binding does not activate G-protein-mediated signal transduction but instead induces beta-arrestin recruitment, leading to ligand internalization. Plays an important role in controlling the migration of immune and cancer cells that express chemokine receptors CCR7 and CCR9, by reducing the availability of CCL19, CCL21, and CCL25 through internalization. Negatively regulates CXCR3-induced chemotaxis. Regulates T-cell development in the thymus. This Bos taurus (Bovine) protein is Atypical chemokine receptor 4 (ACKR4).